A 303-amino-acid chain; its full sequence is Serine/threonine-protein phosphatase PP-X homolog 2 (303 aa).

Mn(2+) contacts are provided by Asp51, His53, Asp79, and Asn111. Residue His112 is the Proton donor of the active site. Mn(2+) contacts are provided by His161 and His235.

The protein belongs to the PPP phosphatase family. PP-4 (PP-X) subfamily. Requires Mn(2+) as cofactor.

It catalyses the reaction O-phospho-L-seryl-[protein] + H2O = L-seryl-[protein] + phosphate. It carries out the reaction O-phospho-L-threonyl-[protein] + H2O = L-threonyl-[protein] + phosphate. The sequence is that of Serine/threonine-protein phosphatase PP-X homolog 2 (Ppx2) from Paramecium tetraurelia.